Reading from the N-terminus, the 233-residue chain is Antiholin-like protein LrgB (233 aa).

A run of 6 helical transmembrane segments spans residues 5-25 (LGINTPYFGILVSLIPFVIAT), 33-53 (GFFLLAPLFVSMVAGIAFLKL), 63-83 (IGGDIINFFLEPATICFAIPL), 97-117 (IFGGIAVGTIIALLLIYLVAI), 152-172 (LTSLAVILNAVVISALGAKIV), and 212-232 (IAVVIVGVIVVAVVPILAPIL).

It belongs to the CidB/LrgB family. LrgB subfamily.

The protein resides in the cell membrane. Inhibits the expression or activity of extracellular murein hydrolases by interacting, possibly with LrgA, with the holin-like proteins CidA and/or CidB. The LrgAB and CidAB proteins may affect the proton motive force of the membrane. May be involved in programmed cell death (PCD), possibly triggering PCD in response to antibiotics and environmental stresses. This is Antiholin-like protein LrgB from Staphylococcus epidermidis (strain ATCC 12228 / FDA PCI 1200).